Reading from the N-terminus, the 408-residue chain is UDP-glucose 4-epimerase 2 (408 aa).

Position 13–44 (13–44 (TVLVTGGAGYIGSHAVLQLLLAGFRAVVVDNL)) interacts with NAD(+). Serine 138 is a substrate binding site. Tyrosine 162 serves as the catalytic Proton acceptor. The interval 369–408 (GSPKQNGHCTNGFSESTRHNGHNGYGLVDSAKHNGNGHFH) is disordered. The span at 370–383 (SPKQNGHCTNGFSE) shows a compositional bias: polar residues.

The protein belongs to the NAD(P)-dependent epimerase/dehydratase family. The cofactor is NAD(+).

It carries out the reaction UDP-alpha-D-glucose = UDP-alpha-D-galactose. It participates in carbohydrate metabolism; galactose metabolism. In terms of biological role, catalyzes the interconversion between UDP-glucose and UDP-galactose. The chain is UDP-glucose 4-epimerase 2 (UGE-2) from Oryza sativa subsp. japonica (Rice).